Consider the following 256-residue polypeptide: Extracellular serine-rich protein ARB_03024 (256 aa).

Positions 1 to 19 are cleaved as a signal peptide; sequence MVATKSVLSAVALAGVAAA. Positions 135-235 are disordered; the sequence is KIVPQSGSPT…TPTASPGAAA (101 aa). Residues 149-159 are compositionally biased toward gly residues; it reads GTLGGSGGSGG. Low complexity-rich tracts occupy residues 160 to 204 and 215 to 235; these read SSSS…QSTP and PSAT…GAAA. The GPI-anchor amidated alanine moiety is linked to residue Ala233. The propeptide at 234-256 is removed in mature form; it reads AAGLKGSAVLAGVVALGAWIGLL.

The protein resides in the cell membrane. The protein localises to the secreted. The chain is Extracellular serine-rich protein ARB_03024 from Arthroderma benhamiae (strain ATCC MYA-4681 / CBS 112371) (Trichophyton mentagrophytes).